Reading from the N-terminus, the 374-residue chain is DNA/RNA-binding protein ALBA4 (374 aa).

It belongs to the histone-like Alba family.

It is found in the cytoplasm. The protein localises to the cell cortex. The protein resides in the perinuclear region. In terms of biological role, possesses DNA- and RNA-binding activities. Binds to DNA with relaxed sequence specificity. May associate with the subtelomeric TARE6 repeats. Regulates the abundance of transcript sub-populations in a stage-specific manner. Regulates activation of male gametocytes. Participates in the coordination of sporozoite development in the oocyst. This is DNA/RNA-binding protein ALBA4 from Plasmodium yoelii yoelii.